Consider the following 194-residue polypeptide: Imidazoleglycerol-phosphate dehydratase (194 aa).

It belongs to the imidazoleglycerol-phosphate dehydratase family.

Its subcellular location is the cytoplasm. It carries out the reaction D-erythro-1-(imidazol-4-yl)glycerol 3-phosphate = 3-(imidazol-4-yl)-2-oxopropyl phosphate + H2O. The protein operates within amino-acid biosynthesis; L-histidine biosynthesis; L-histidine from 5-phospho-alpha-D-ribose 1-diphosphate: step 6/9. The protein is Imidazoleglycerol-phosphate dehydratase of Thermoanaerobacter sp. (strain X514).